The primary structure comprises 245 residues: Thiopurine S-methyltransferase (245 aa).

29 to 40 (WREKWVDGKIGF) lines the S-adenosyl-L-methionine pocket. Phe40 lines the substrate pocket. Lys58 carries the N6-acetyllysine modification. The S-adenosyl-L-methionine site is built by Leu69, Glu90, and Arg152.

The protein belongs to the class I-like SAM-binding methyltransferase superfamily. TPMT family. In terms of assembly, monomer.

Its subcellular location is the cytoplasm. The enzyme catalyses S-adenosyl-L-methionine + a thiopurine = S-adenosyl-L-homocysteine + a thiopurine S-methylether.. The polypeptide is Thiopurine S-methyltransferase (TPMT) (Lynx rufus (Bobcat)).